A 136-amino-acid chain; its full sequence is uncharacterized protein (136 aa).

It is found in the mitochondrion. This is an uncharacterized protein from Arabidopsis thaliana (Mouse-ear cress).